The chain runs to 251 residues: Ubiquinone/menaquinone biosynthesis C-methyltransferase UbiE (251 aa).

S-adenosyl-L-methionine-binding positions include threonine 74, aspartate 95, 123–124, and serine 140; that span reads NA.

Belongs to the class I-like SAM-binding methyltransferase superfamily. MenG/UbiE family.

The enzyme catalyses a 2-demethylmenaquinol + S-adenosyl-L-methionine = a menaquinol + S-adenosyl-L-homocysteine + H(+). The catalysed reaction is a 2-methoxy-6-(all-trans-polyprenyl)benzene-1,4-diol + S-adenosyl-L-methionine = a 5-methoxy-2-methyl-3-(all-trans-polyprenyl)benzene-1,4-diol + S-adenosyl-L-homocysteine + H(+). Its pathway is quinol/quinone metabolism; menaquinone biosynthesis; menaquinol from 1,4-dihydroxy-2-naphthoate: step 2/2. It participates in cofactor biosynthesis; ubiquinone biosynthesis. Methyltransferase required for the conversion of demethylmenaquinol (DMKH2) to menaquinol (MKH2) and the conversion of 2-polyprenyl-6-methoxy-1,4-benzoquinol (DDMQH2) to 2-polyprenyl-3-methyl-6-methoxy-1,4-benzoquinol (DMQH2). The protein is Ubiquinone/menaquinone biosynthesis C-methyltransferase UbiE of Escherichia coli O9:H4 (strain HS).